A 446-amino-acid chain; its full sequence is Transcription factor Dp-2 (446 aa).

T2 is subject to N-acetylthreonine. S24 is modified (phosphoserine). Residues 60–82 (PQMIISTPQRLTSSGSVLIGSPY) form an interaction with CEBPA region. The short motif at 103–118 (GDRKRARKFIDSDFSE) is the Nuclear localization signal element. The residue at position 122 (S122) is a Phosphoserine. Residues 129–210 (GKGLRHFSMK…KKEIKWIGLP (82 aa)) mediate DNA binding. The DEF box motif lies at 176 to 210 (DQKNIRRRVYDALNVLMAMNIISKEKKEIKWIGLP). The interval 219 to 292 (NLEIEKQRRI…RKTVIDCSIS (74 aa)) is dimerization. The tract at residues 229–261 (ERIKQKRAQLQELLLQQIAFKNLVQRNRQNEQQ) is DCB1. Residues 274-330 (LPFIIINTSRKTVIDCSISSDKFEYLFNFDNTFEIHDDIEVLKRMGMSFGLESGKCS) are DCB2. The span at 409 to 419 (SHQSSSAASHC) shows a compositional bias: low complexity. Residues 409 to 446 (SHQSSSAASHCSESRGETPCSFNDEDEEDDEEDSSSPE) form a disordered region. Over residues 431–446 (NDEDEEDDEEDSSSPE) the composition is skewed to acidic residues.

The protein belongs to the E2F/DP family. In terms of assembly, component of the DRTF1/E2F transcription factor complex. Forms heterodimers with E2F family members. The complex can interact with hypophosphorylated retinoblastoma protein RB1 and related proteins (RBL1 and RBL2) that inhibit the E2F transactivation domain. During the cell cycle, RB becomes phosphorylated in mid-to-late G1 phase, detaches from the DRTF1/E2F complex rendering E2F transcriptionally active. Viral oncoproteins, notably E1A, T-antigen and HPV E7, are capable of sequestering RB protein, thus releasing the active complex. Interacts with GMCL. Component of the DREAM complex (also named LINC complex) at least composed of E2F4, E2F5, LIN9, LIN37, LIN52, LIN54, MYBL1, MYBL2, RBL1, RBL2, RBBP4, TFDP1 and TFDP2. The complex exists in quiescent cells where it represses cell cycle-dependent genes. It dissociates in S phase when LIN9, LIN37, LIN52 and LIN54 form a subcomplex that binds to MYBL2. The complex TFDP2:E2F1 interacts with CEBPA; the interaction prevents CEBPA binding to target genes promoters and represses its transcriptional activity. In terms of processing, ser-24 is probably phosphorylated by CDK2. In terms of tissue distribution, high levels in heart and skeletal muscle. Also found in placenta, kidney, brain, lung and liver. The presence as well as the abundance of the different transcripts appear to vary significantly in different tissues and cell lines.

Its subcellular location is the nucleus. Functionally, can stimulate E2F-dependent transcription. Binds DNA cooperatively with E2F family members through the E2 recognition site, 5'-TTTC[CG]CGC-3', found in the promoter region of a number of genes whose products are involved in cell cycle regulation or in DNA replication. The TFDP2:E2F complex functions in the control of cell-cycle progression from G1 to S phase. The E2F1:DP complex appears to mediate both cell proliferation and apoptosis. Blocks adipocyte differentiation by repressing CEBPA binding to its target gene promoters. The polypeptide is Transcription factor Dp-2 (TFDP2) (Homo sapiens (Human)).